Consider the following 434-residue polypeptide: MAASDTERDGLAPEKTSPDRDKKKEQSEVSVSPRASKHHYSRSRSRSRERKRKSDNEGRKHRSRSRSKEGRRHESKDKSSKKHKSEEHNDKEHSSDKGRERLNSSENGEDRHKRKERKSSRGRSHSRSRSRERRHRSRSRERKKSRSRSRERKKSRSRSRERKKSRSRSRERKRRIRSRSRSRSRHRHRTRSRSRTRSRSRDRKKRIEKPRRFSRSLSRTPSPPPFRGRNTAMDAQEALARRLERAKKLQEQREKEMVEKQKQQEIAAAAATGGSVLNVAALLASGTQVTPQIAMAAQMAALQAKALAETGIAVPSYYNPAAVNPMKFAEQEKKRKMLWQGKKEGDKSQSAEIWEKLNFGNKDQNVKFRKLMGIKSEDEAGCSSVDEESYKTLKQQEEVFRNLDAQYEMARSQTHTQRGMGLGFTSSMRGMDAV.

The span at 1–27 (MAASDTERDGLAPEKTSPDRDKKKEQS) shows a compositional bias: basic and acidic residues. The interval 1-230 (MAASDTERDG…PSPPPFRGRN (230 aa)) is disordered. The residue at position 2 (alanine 2) is an N-acetylalanine. Position 4 is a phosphoserine (serine 4). Threonine 6 and threonine 16 each carry phosphothreonine. Serine 17, serine 30, and serine 32 each carry phosphoserine. Residues 35–51 (ASKHHYSRSRSRSRERK) show a composition bias toward basic residues. Positions 66 to 111 (RSKEGRRHESKDKSSKKHKSEEHNDKEHSSDKGRERLNSSENGEDR) are enriched in basic and acidic residues. At serine 104 the chain carries Phosphoserine. Over residues 112-214 (HKRKERKSSR…KRIEKPRRFS (103 aa)) the composition is skewed to basic residues. A coiled-coil region spans residues 230-270 (NTAMDAQEALARRLERAKKLQEQREKEMVEKQKQQEIAAAA). Lysine 375 participates in a covalent cross-link: Glycyl lysine isopeptide (Lys-Gly) (interchain with G-Cter in SUMO1); alternate. Lysine 375 is covalently cross-linked (Glycyl lysine isopeptide (Lys-Gly) (interchain with G-Cter in SUMO2); alternate). Serine 376 carries the phosphoserine modification.

The protein belongs to the RSRC2 family.

The sequence is that of Arginine/serine-rich coiled-coil protein 2 (RSRC2) from Homo sapiens (Human).